The sequence spans 265 residues: Taurine import ATP-binding protein TauB (265 aa).

Residues 7 to 236 form the ABC transporter domain; sequence QNLNMIFKTP…MGIDGDLREI (230 aa). 41–48 contacts ATP; that stretch reads GPSGCGKT.

The protein belongs to the ABC transporter superfamily. Taurine importer (TC 3.A.1.17.1) family. The complex is composed of two ATP-binding proteins (TauB), two transmembrane proteins (TauC) and a solute-binding protein (TauA).

The protein localises to the cell inner membrane. The catalysed reaction is taurine(out) + ATP + H2O = taurine(in) + ADP + phosphate + H(+). Part of the ABC transporter complex TauABC involved in taurine import. Responsible for energy coupling to the transport system. The chain is Taurine import ATP-binding protein TauB from Pelagibacter ubique (strain HTCC1062).